A 229-amino-acid polypeptide reads, in one-letter code: Glycine betaine/carnitine/choline transport system permease protein OpuCD (229 aa).

Residues 22–202 (FYRHFLMSVY…LMAVIADLVM (181 aa)) form the ABC transmembrane type-1 domain. 5 helical membrane-spanning segments follow: residues 27–47 (LMSVYGVLFAAIVGIPLGILI), 55–74 (GWVFAVTNVIQTIPALAMLA), 78–100 (LVMGLGANTVILSLFLYSLLPII), 148–168 (ALVIAIGITAIGTFVGAGGLG), and 182–202 (AIILAGAIPTALMAVIADLVM).

It belongs to the binding-protein-dependent transport system permease family. CysTW subfamily. The complex is composed of two ATP-binding proteins (OpuCA), two transmembrane proteins (OpuCB and OpuCD) and a solute-binding protein (OpuCC).

The protein resides in the cell membrane. Functionally, involved in a high affinity multicomponent binding-protein-dependent transport system for glycine betaine, carnitine and choline; probably responsible for the translocation of the substrate across the membrane. In Bacillus subtilis (strain 168), this protein is Glycine betaine/carnitine/choline transport system permease protein OpuCD (opuCD).